The sequence spans 180 residues: tRNA (cytidine(56)-2'-O)-methyltransferase (180 aa).

Residue L85 participates in S-adenosyl-L-methionine binding.

Belongs to the aTrm56 family. In terms of assembly, homodimer.

Its subcellular location is the cytoplasm. It catalyses the reaction cytidine(56) in tRNA + S-adenosyl-L-methionine = 2'-O-methylcytidine(56) in tRNA + S-adenosyl-L-homocysteine + H(+). Functionally, specifically catalyzes the AdoMet-dependent 2'-O-ribose methylation of cytidine at position 56 in tRNAs. This Methanobrevibacter smithii (strain ATCC 35061 / DSM 861 / OCM 144 / PS) protein is tRNA (cytidine(56)-2'-O)-methyltransferase.